The sequence spans 158 residues: Ribosome maturation factor RimP (158 aa).

It belongs to the RimP family.

The protein localises to the cytoplasm. Its function is as follows. Required for maturation of 30S ribosomal subunits. The polypeptide is Ribosome maturation factor RimP (Streptococcus uberis (strain ATCC BAA-854 / 0140J)).